The chain runs to 292 residues: Phosphatidylserine decarboxylase proenzyme (292 aa).

Catalysis depends on charge relay system; for autoendoproteolytic cleavage activity residues Asp-89, His-146, and Ser-252. Ser-252 acts as the Schiff-base intermediate with substrate; via pyruvic acid; for decarboxylase activity in catalysis. Position 252 is a pyruvic acid (Ser); by autocatalysis (Ser-252).

The protein belongs to the phosphatidylserine decarboxylase family. PSD-B subfamily. Prokaryotic type I sub-subfamily. Heterodimer of a large membrane-associated beta subunit and a small pyruvoyl-containing alpha subunit. Pyruvate is required as a cofactor. Post-translationally, is synthesized initially as an inactive proenzyme. Formation of the active enzyme involves a self-maturation process in which the active site pyruvoyl group is generated from an internal serine residue via an autocatalytic post-translational modification. Two non-identical subunits are generated from the proenzyme in this reaction, and the pyruvate is formed at the N-terminus of the alpha chain, which is derived from the carboxyl end of the proenzyme. The autoendoproteolytic cleavage occurs by a canonical serine protease mechanism, in which the side chain hydroxyl group of the serine supplies its oxygen atom to form the C-terminus of the beta chain, while the remainder of the serine residue undergoes an oxidative deamination to produce ammonia and the pyruvoyl prosthetic group on the alpha chain. During this reaction, the Ser that is part of the protease active site of the proenzyme becomes the pyruvoyl prosthetic group, which constitutes an essential element of the active site of the mature decarboxylase.

The protein resides in the cell membrane. It catalyses the reaction a 1,2-diacyl-sn-glycero-3-phospho-L-serine + H(+) = a 1,2-diacyl-sn-glycero-3-phosphoethanolamine + CO2. The protein operates within phospholipid metabolism; phosphatidylethanolamine biosynthesis; phosphatidylethanolamine from CDP-diacylglycerol: step 2/2. Functionally, catalyzes the formation of phosphatidylethanolamine (PtdEtn) from phosphatidylserine (PtdSer). The polypeptide is Phosphatidylserine decarboxylase proenzyme (Shewanella baltica (strain OS185)).